We begin with the raw amino-acid sequence, 603 residues long: Glutamyl-tRNA(Gln) amidotransferase subunit B, mitochondrial (603 aa).

Disordered stretches follow at residues 38-61 (RGRD…SNGA) and 72-91 (EQAR…PPEH). Positions 42-58 (WSSTSRRAIDTQTSGAS) are enriched in polar residues.

This sequence belongs to the GatB/GatE family. GatB subfamily. As to quaternary structure, subunit of the heterotrimeric GatCAB amidotransferase (AdT) complex, composed of A, B and C subunits.

The protein localises to the mitochondrion. It carries out the reaction L-glutamyl-tRNA(Gln) + L-glutamine + ATP + H2O = L-glutaminyl-tRNA(Gln) + L-glutamate + ADP + phosphate + H(+). In terms of biological role, allows the formation of correctly charged Gln-tRNA(Gln) through the transamidation of misacylated Glu-tRNA(Gln) in the mitochondria. The reaction takes place in the presence of glutamine and ATP through an activated gamma-phospho-Glu-tRNA(Gln). The polypeptide is Glutamyl-tRNA(Gln) amidotransferase subunit B, mitochondrial (Paracoccidioides brasiliensis (strain Pb18)).